The following is a 529-amino-acid chain: Glycerol kinase 5 (529 aa).

The ATP site is built by threonine 22 and threonine 23. 3 residues coordinate glycerol: arginine 92, aspartate 269, and glutamine 270. Residues threonine 291, glycine 334, and glycine 434 each contribute to the ATP site.

This sequence belongs to the FGGY kinase family.

It is found in the cytoplasm. The catalysed reaction is glycerol + ATP = sn-glycerol 3-phosphate + ADP + H(+). It participates in polyol metabolism; glycerol degradation via glycerol kinase pathway; sn-glycerol 3-phosphate from glycerol: step 1/1. In terms of biological role, skin-specific kinase that plays a key role in glycerol metabolism, catalyzing its phosphorylation to produce sn-glycerol 3-phosphate. Involved in skin-specific regulation of sterol regulatory element-binding protein (SREBP) processing and lipid biosynthesis. The protein is Glycerol kinase 5 (gk5) of Danio rerio (Zebrafish).